The primary structure comprises 428 residues: Leucine-rich repeat-containing protein 42 (428 aa).

5 LRR repeats span residues 149-170, 174-195, 202-222, 234-255, and 259-280; these read VLCSLCLRNRYLVISEKLEEIK, ELTCLDLSCCKLGDEHELLEHL, SVTQLHLKDNCLSDAGVRKMT, NLTLLDLSCNPEITDAGIGYLF, and KLNCLDISGTGLKDIKTVKHKL. The interval 379–412 is disordered; the sequence is KHEAISSQESKKSKKRPFEESETEQNNSSQPSKQ. S406 and S407 each carry phosphoserine.

It belongs to the LRRC42 family.

The chain is Leucine-rich repeat-containing protein 42 (LRRC42) from Homo sapiens (Human).